A 476-amino-acid chain; its full sequence is 3-isopropylmalate dehydratase large subunit (476 aa).

The [4Fe-4S] cluster site is built by Cys357, Cys417, and Cys420.

The protein belongs to the aconitase/IPM isomerase family. LeuC type 1 subfamily. In terms of assembly, heterodimer of LeuC and LeuD. It depends on [4Fe-4S] cluster as a cofactor.

It carries out the reaction (2R,3S)-3-isopropylmalate = (2S)-2-isopropylmalate. It participates in amino-acid biosynthesis; L-leucine biosynthesis; L-leucine from 3-methyl-2-oxobutanoate: step 2/4. In terms of biological role, catalyzes the isomerization between 2-isopropylmalate and 3-isopropylmalate, via the formation of 2-isopropylmaleate. The chain is 3-isopropylmalate dehydratase large subunit from Mycolicibacterium paratuberculosis (strain ATCC BAA-968 / K-10) (Mycobacterium paratuberculosis).